The chain runs to 116 residues: Phycoerythrin alpha-3 subunit (116 aa).

(2R,3E)-phycoerythrobilin contacts are provided by S53, E63, R64, C67, and K85.

This sequence belongs to the phycoerythrin family. As to quaternary structure, heterotetramer of 2 different alpha chains and 2 identical beta chains which form 2 alpha-beta heterodimers within the heterotetramer. The two alpha-beta heterodimers are rotated to an open configuration in contrast to the closed configuration found in other cryptophyte species due to the insertion of a single amino acid, Asp-65, in a conserved region of the alpha chain. In the open form, the central chromophores are not in physical contact but are separated by a water-filled channel. Contains three phycoerythrobilin chromophores with binding mediated by both the alpha and beta subunits.

Its subcellular location is the plastid. It is found in the chloroplast thylakoid membrane. Functionally, light-harvesting photosynthetic tetrapyrrole chromophore-protein from the phycobiliprotein complex. In Hemiselmis andersenii (Cryptophyte alga), this protein is Phycoerythrin alpha-3 subunit.